Here is a 440-residue protein sequence, read N- to C-terminus: Lysine histidine transporter-like 6 (440 aa).

The span at 1–10 (MVSSSPVSPS) shows a compositional bias: polar residues. The interval 1–25 (MVSSSPVSPSKETDRKSGEKWTAED) is disordered. Residues 1-31 (MVSSSPVSPSKETDRKSGEKWTAEDPSRPAK) lie on the Cytoplasmic side of the membrane. A compositionally biased stretch (basic and acidic residues) spans 11–25 (KETDRKSGEKWTAED). Residues 32–51 (WWYSTFHTVTAMIGAGVLSL) traverse the membrane as a helical segment. Residues 52-61 (PYAMAYLGWG) lie on the Extracellular side of the membrane. The helical transmembrane segment at 62-82 (PGTFVLAMTWGLTLNTMWQMV) threads the bilayer. The Cytoplasmic portion of the chain corresponds to 83-109 (QLHECVPGTRFDRYIDLGRYAFGPKLG). A helical membrane pass occupies residues 110-130 (PWIVLPQQLIVQVGCNIVYMV). Over 131 to 152 (TGGKCLKQFVEITCSTCTPVRQ) the chain is Extracellular. Residues 153 to 173 (SYWILGFGGVHFILSQLPNFN) traverse the membrane as a helical segment. Position 174 (Ser174) is a topological domain, cytoplasmic. Residues 175-195 (VAGVSLAAAVMSLCYSTIAWG) traverse the membrane as a helical segment. Over 196–221 (GSIAHGRVPDVSYDYKATNPGDFTFR) the chain is Extracellular. Residues 222–242 (VFNALGQISFAFAGHAVALEI) traverse the membrane as a helical segment. Topologically, residues 243–261 (QATMPSTPERPSKVPMWQG) are cytoplasmic. A helical membrane pass occupies residues 262-282 (VIGAYVVNAVCYFPVALICYW). At 283 to 300 (AFGQDVDDNVLMNLQRPA) the chain is on the extracellular side. Residues 301–321 (WLIAAANLMVVVHVIGSYQVF) form a helical membrane-spanning segment. The Cytoplasmic segment spans residues 322–353 (AMPVFDLLERMMVNKFGFKHGVVLRFFTRTIY). A run of 2 helical transmembrane segments spans residues 354 to 374 (VAFT…LGFF) and 375 to 395 (GGFG…LIIK). The Cytoplasmic portion of the chain corresponds to 396–399 (KPRR). Residues 400 to 420 (FSVTWFVNWISIIVGVFIMLA) traverse the membrane as a helical segment. The Extracellular portion of the chain corresponds to 421-440 (STIGGLRNIIADSSTYSFYA).

This sequence belongs to the amino acid/polyamine transporter 2 family. Amino acid/auxin permease (AAAP) (TC 2.A.18.2) subfamily.

The protein localises to the cell membrane. In terms of biological role, amino acid transporter. This chain is Lysine histidine transporter-like 6, found in Arabidopsis thaliana (Mouse-ear cress).